A 432-amino-acid chain; its full sequence is MASSVRLVKKPVLVAPVDPTPSTVLSLSSLDSQLFLRFPIEYLLVYASPHGVDRDVTAARVKAALARSLVPYYPLAGRVKTRPDSTGLDVVCQAQGAGLLEAVSDYTASDFQRAPRSVAEWRKLLLVEVFKVVPPLVVQLTWLSDGCVALGIGFSHCVIDGIGSSEFLNLFAELATSRAKLSEFQPKPVWDRQLLNSAGRTNLGTHPEFGRVPDLSGFVTRFAQERLSPTSITFDKTWLKELKNIAMSTSQAGEFPYTSFEVLSGHIWRSWARSLNLPAKQVLKLLFSINIRNRVKPSLPAGYYGNAFVLGCAQTSVKDLTEKGLGYCADLVRGAKERVGDEYAREVVESVSWPRRASPDSVGVLIISQWSRLGLDRVDFGLGRPVHVGPICCDRYCLFLPVRDRMEAVKVMVAVPTSAVDRYENLMRSPYS.

Catalysis depends on proton acceptor residues H156 and D379.

Belongs to the plant acyltransferase family.

It catalyses the reaction 2-(methylsulfanyl)acetyl-CoA + butan-1-ol = butyl 2-(methylsulfanyl)acetate + CoA. The catalysed reaction is ethanol + acetyl-CoA = ethyl acetate + CoA. The enzyme catalyses butan-1-ol + acetyl-CoA = butyl acetate + CoA. It carries out the reaction butan-1-ol + propanoyl-CoA = butyl propanoate + CoA. Its function is as follows. Involved in the biosynthesis of volatile esters which confer kiwifruit flavor. Alcohol acyl transferase that can use a wide range of alcohols as substrate to produce esters. Exhibits acetyl-CoA:alcohol O-acyltransferase activity. The sequence is that of Alcohol acyltransferase 9 from Actinidia chinensis var. chinensis (Chinese soft-hair kiwi).